A 98-amino-acid polypeptide reads, in one-letter code: N(2)-fixation sustaining protein CowN (98 aa).

Belongs to the CowN family.

Is required to sustain N(2)-dependent growth in the presence of low levels of carbon monoxide (CO). Probably acts by protecting the N(2) fixation ability of the nitrogenase complex, which is inactivated in the presence of CO. This chain is N(2)-fixation sustaining protein CowN, found in Trichlorobacter lovleyi (strain ATCC BAA-1151 / DSM 17278 / SZ) (Geobacter lovleyi).